Reading from the N-terminus, the 504-residue chain is Amidophosphoribosyltransferase (504 aa).

The Nucleophile role is filled by C2. The Glutamine amidotransferase type-2 domain occupies C2–E235. Positions 305, 367, and 368 each coordinate Mg(2+).

This sequence in the C-terminal section; belongs to the purine/pyrimidine phosphoribosyltransferase family. Mg(2+) serves as cofactor.

It carries out the reaction 5-phospho-beta-D-ribosylamine + L-glutamate + diphosphate = 5-phospho-alpha-D-ribose 1-diphosphate + L-glutamine + H2O. The protein operates within purine metabolism; IMP biosynthesis via de novo pathway; N(1)-(5-phospho-D-ribosyl)glycinamide from 5-phospho-alpha-D-ribose 1-diphosphate: step 1/2. Catalyzes the formation of phosphoribosylamine from phosphoribosylpyrophosphate (PRPP) and glutamine. The chain is Amidophosphoribosyltransferase from Pasteurella multocida (strain Pm70).